Here is a 630-residue protein sequence, read N- to C-terminus: Plastin-3 (630 aa).

EF-hand domains are found at residues 12–47 and 52–87; these read DELD…ANMP and KVRE…VKSS. Residues Asp25, Asn27, Asn29, Glu36, Asp65, Asn67, Asp69, Lys71, and Glu76 each coordinate Ca(2+). Actin-binding stretches follow at residues 109–382 and 383–627; these read TSEL…ALTK and PENQ…GRGM. 2 consecutive Calponin-homology (CH) domains span residues 123 to 239 and 267 to 378; these read EEEK…KIGL and LSPE…NKYP. Residues Ser268, Ser293, Ser326, and Ser339 each carry the phosphoserine modification. Thr391 carries the phosphothreonine modification. Calponin-homology (CH) domains are found at residues 397-506 and 518-627; these read TREE…RRYT and KAND…GRGM.

As to quaternary structure, monomer.

It is found in the cytoplasm. Its function is as follows. Actin-bundling protein. In Bos taurus (Bovine), this protein is Plastin-3 (PLS3).